The sequence spans 503 residues: Sugar phosphate exchanger 3 (503 aa).

The chain crosses the membrane as a helical span at residues 20–40; sequence YTHHHLAAFLLTFFSYSLLHA. 2 N-linked (GlcNAc...) asparagine glycosylation sites follow: Asn-62 and Asn-71. 5 helical membrane-spanning segments follow: residues 87 to 107, 119 to 139, 152 to 172, 183 to 203, and 214 to 234; these read TLFLGLLDTIFLFAYAVGLFI, LVLTFGMCSSAITMFVFGTLT, LVWIVNGLLQSTGWPCVVAIM, FVFGLWSACASVGNILGAFLA, and AFLVTASVQFAGGIIIFFGLV. The N-linked (GlcNAc...) asparagine glycan is linked to Asn-275. The next 6 helical transmembrane spans lie at 300–322, 342–362, 367–387, 395–415, 437–457, and 466–486; these read GVLLYSLAYACLKLVNYSFFFWL, IWYDIGGIVGGTVQGLISDLM, PVLTVSLLLAVGALFGYSHSP, FIMSITGFFIGGPSNMISSAI, GIVDGTGSIGAAMGQFLVPLI, and VFYFFIFMICMTTVFMVPLIV.

The protein belongs to the major facilitator superfamily. Organophosphate:Pi antiporter (OPA) (TC 2.A.1.4) family.

The protein resides in the endoplasmic reticulum membrane. Its subcellular location is the lysosome membrane. Functionally, unlike the other SLC37 members, seems to lack glucose-6-phosphate antiporter activity. The chain is Sugar phosphate exchanger 3 (slc37a3) from Xenopus laevis (African clawed frog).